The chain runs to 102 residues: Large ribosomal subunit protein uL23c (102 aa).

This sequence belongs to the universal ribosomal protein uL23 family. Part of the 50S ribosomal subunit.

Its subcellular location is the plastid. The protein localises to the chloroplast. Its function is as follows. Binds to 23S rRNA. This is Large ribosomal subunit protein uL23c (rpl23) from Trieres chinensis (Marine centric diatom).